The chain runs to 578 residues: Thrombomodulin (578 aa).

The signal sequence occupies residues 1–16; sequence MLRVLLLGVLAPAGLG. The Extracellular segment spans residues 17–518; the sequence is LPTPAQPQPR…SPSPVGPVHS (502 aa). Residues 31–167 form the C-type lectin domain; it reads MEHDCFQLFR…CAAEADGFLC (137 aa). Residue Asn-114 is glycosylated (N-linked (GlcNAc...) asparagine). 19 disulfide bridges follow: Cys-137–Cys-158, Cys-246–Cys-257, Cys-253–Cys-266, Cys-268–Cys-281, Cys-289–Cys-297, Cys-293–Cys-309, Cys-311–Cys-324, Cys-330–Cys-341, Cys-337–Cys-350, Cys-352–Cys-363, Cys-370–Cys-379, Cys-375–Cys-389, Cys-391–Cys-405, Cys-409–Cys-414, Cys-418–Cys-426, Cys-428–Cys-440, Cys-446–Cys-455, Cys-451–Cys-464, and Cys-466–Cys-480. 2 EGF-like domains span residues 242–282 and 285–325; these read GAWD…RSCA and AEHS…HRCE. N-linked (GlcNAc...) asparagine glycosylation is present at Asn-300. An EGF-like 3; calcium-binding domain is found at 326–364; sequence DVDDCIQVPSLCPQLCVNTRGAFECHCYPGYELVDNECV. A (3R)-3-hydroxyasparagine modification is found at Asn-343. EGF-like domains are found at residues 366-406 and 405-441; these read PVDP…HRCQ and CQMF…FMCT. Asn-410 carries N-linked (GlcNAc...) asparagine glycosylation. The EGF-like 6; calcium-binding domain maps to 442–481; the sequence is DIDECENGECPEACRNLPGTYECICGPDSPLAGQVATDCG. Residues 483–512 are disordered; sequence IISDPDGDSDSGSGEPPVTPTPGVTPSPSP. Ser-493 and Ser-495 each carry an O-linked (Xyl...) (chondroitin sulfate) serine glycan. The segment covering 499–512 has biased composition (pro residues); that stretch reads PVTPTPGVTPSPSP. The helical transmembrane segment at 519–539 threads the bilayer; the sequence is GVLIGISIASLSLVVALLALL. Over 540–578 the chain is Cytoplasmic; sequence CHLRKKQGAPRAELEYKCGAPAKEVVLQHVRTEQMPQKL.

In terms of assembly, interacts with ITGAL, ITGAM and ITGB2. Interacts with thrombin/F2; this interaction switches the specificity of thrombin from a procoagulant to an anticoagulant and antifibrinolytic protease. Interacts with ANGP1 and ANGP2; these interactions significantly inhibit the generation of activated PC and TAFIa/CPB2 by the thrombin/thrombomodulin complex. Interacts with PF4; this interaction enhances generation of activated protein C. Interacts with HMGB1; this interaction inhibits HMGB1 inflammatory activity. N-glycosylated. Post-translationally, the iron and 2-oxoglutarate dependent 3-hydroxylation of aspartate and asparagine is (R) stereospecific within EGF domains. In terms of tissue distribution, expressed in lung, liver, spleen, kidney, pancreas and lymph node. Low expression in heart, cerebrum, urinary bladder and uterus.

The protein resides in the membrane. Its function is as follows. Endothelial cell receptor that plays a critical role in regulating several physiological processes including hemostasis, coagulation, fibrinolysis, inflammation, and angiogenesis. Acts as a cofactor for thrombin activation of protein C/PROC on the surface of vascular endothelial cells leading to initiation of the activated protein C anticoagulant pathway. Also accelerates the activation of the plasma carboxypeptidase B2/CPB2, which catalyzes removal of C-terminal basic amino acids from its substrates including kinins or anaphylatoxins leading to fibrinolysis inhibition. Plays critical protective roles in changing the cleavage specificity of protease-activated receptor 1/PAR1, inhibiting endothelial cell permeability and inflammation. Suppresses inflammation distinctly from its anticoagulant cofactor activity by sequestering HMGB1 thereby preventing it from engaging cellular receptors such as RAGE and contributing to the inflammatory response. This is Thrombomodulin (THBD) from Canis lupus familiaris (Dog).